The following is a 422-amino-acid chain: Probable metallocarboxypeptidase A (422 aa).

A signal peptide spans 1–17 (MRSVLSLALLAANVVTA). A propeptide spans 18–112 (AVVAPFDYSG…FEAYSAGYAP (95 aa)) (activation peptide). The Peptidase M14 domain occupies 119–419 (SYHSYQDHLS…AGTVAMLKAV (301 aa)). Residues His-179 and Glu-182 each contribute to the Zn(2+) site. Residues 179–182 (HARE), Arg-237, and 254–255 (NR) each bind substrate. Residues Cys-248 and Cys-271 are joined by a disulfide bond. Residue His-309 participates in Zn(2+) binding. 310–311 (SY) serves as a coordination point for substrate. Catalysis depends on Glu-385, which acts as the Proton donor/acceptor.

It belongs to the peptidase M14 family. Zn(2+) is required as a cofactor.

It is found in the secreted. Functionally, extracellular metalloprotease that contributes to pathogenicity. The protein is Probable metallocarboxypeptidase A (MCPA) of Arthroderma benhamiae (strain ATCC MYA-4681 / CBS 112371) (Trichophyton mentagrophytes).